The following is a 448-amino-acid chain: Hyaluronidase conohyal-Cn1 (448 aa).

Positions 1–18 are cleaved as a signal peptide; it reads MRAVVVVTGLVVVVVATA. A propeptide spanning residues 19–33 is cleaved from the precursor; sequence LSLPNHDVKSATSSR. The disordered stretch occupies residues 26–55; that stretch reads VKSATSSRSSSDYQGSSGDDCDEGLPPPDQ. Low complexity predominate over residues 31–43; it reads SSRSSSDYQGSSG. Cys67 and Cys344 form a disulfide bridge. Asn141 carries N-linked (GlcNAc...) asparagine glycosylation. Glu151 functions as the Proton donor in the catalytic mechanism. N-linked (GlcNAc...) asparagine glycans are attached at residues Asn169 and Asn361. 3 disulfide bridges follow: Cys369/Cys380, Cys374/Cys413, and Cys415/Cys424. In terms of domain architecture, EGF-like spans 413 to 424; it reads CRCYSAWEGACC.

Belongs to the glycosyl hydrolase 56 family. Expressed by the venom duct.

It is found in the secreted. The catalysed reaction is Random hydrolysis of (1-&gt;4)-linkages between N-acetyl-beta-D-glucosamine and D-glucuronate residues in hyaluronate.. Its function is as follows. Hyaluronidase catalyzes the hydrolysis of hyaluronic acid (HA), an anionic, nonsulfated glycosaminoglycan distributed widely throughout connective, epithelial, and neural tissues. In venom, they are known to enhance diffusion of the venom by degrading the extracellular matrix. The polypeptide is Hyaluronidase conohyal-Cn1 (Conus consors (Singed cone)).